Consider the following 445-residue polypeptide: Exodeoxyribonuclease 7 large subunit (445 aa).

This sequence belongs to the XseA family. In terms of assembly, heterooligomer composed of large and small subunits.

Its subcellular location is the cytoplasm. The catalysed reaction is Exonucleolytic cleavage in either 5'- to 3'- or 3'- to 5'-direction to yield nucleoside 5'-phosphates.. Its function is as follows. Bidirectionally degrades single-stranded DNA into large acid-insoluble oligonucleotides, which are then degraded further into small acid-soluble oligonucleotides. The chain is Exodeoxyribonuclease 7 large subunit from Shewanella pealeana (strain ATCC 700345 / ANG-SQ1).